We begin with the raw amino-acid sequence, 343 residues long: Heat-inducible transcription repressor HrcA (343 aa).

The protein belongs to the HrcA family.

In terms of biological role, negative regulator of class I heat shock genes (grpE-dnaK-dnaJ and groELS operons). Prevents heat-shock induction of these operons. This Mycobacterium marinum (strain ATCC BAA-535 / M) protein is Heat-inducible transcription repressor HrcA.